Here is a 276-residue protein sequence, read N- to C-terminus: E3 ubiquitin-protein ligase CCNB1IP1 (276 aa).

The segment at 10 to 52 (CNYRKCRIKLSGYAWVTACSHIFCDQHGSGEFSRSPAICPACN) adopts an RING-type; atypical zinc-finger fold. Positions 146 to 182 (MKKVLEEYKKKFSDISEKLMERNRQYQKLQGLYDSLR) form a coiled coil.

Interacts with CCNB1, UBE2L3 and NF2. Ubiquitinated; autoubiquitinated. In terms of processing, phosphorylated by CDK1 on serine or threonine residues (in vitro). As to expression, expressed predominantly in the testes and 17 day embryos (corresponding to prophase I in females). Weakly or not expressed in other tissues.

The protein resides in the nucleus. It localises to the chromosome. It catalyses the reaction S-ubiquitinyl-[E2 ubiquitin-conjugating enzyme]-L-cysteine + [acceptor protein]-L-lysine = [E2 ubiquitin-conjugating enzyme]-L-cysteine + N(6)-ubiquitinyl-[acceptor protein]-L-lysine.. It participates in protein modification; protein ubiquitination. In terms of biological role, ubiquitin E3 ligase that acts as a limiting factor for crossing-over during meiosis: required during zygonema to limit the colocalization of RNF212 with MutS-gamma-associated recombination sites and thereby establish early differentiation of crossover and non-crossover sites. Later, it is directed by MutL-gamma to stably accumulate at designated crossover sites. Probably promotes the dissociation of RNF212 and MutS-gamma to allow the progression of recombination and the implementation of the final steps of crossing over. Modulates cyclin-B levels and participates in the regulation of cell cycle progression through the G2 phase. Overexpression causes delayed entry into mitosis. The sequence is that of E3 ubiquitin-protein ligase CCNB1IP1 (Ccnb1ip1) from Mus musculus (Mouse).